The chain runs to 818 residues: Serine/threonine-protein kinase PTK2/STK2 (818 aa).

The span at 28–39 (NSSSHTDNSSLL) shows a compositional bias: polar residues. Disordered regions lie at residues 28-100 (NSSS…GSVS) and 117-177 (NPYL…SHHF). A Phosphothreonine modification is found at Thr-56. Positions 57-81 (SPSISGSGSGGNSPSSSAGARQRSA) are enriched in low complexity. A phosphoserine mark is found at Ser-59 and Ser-80. Residues 136 to 160 (TRDRDRAVLDREKEKERARNKERNT) are compositionally biased toward basic and acidic residues. In terms of domain architecture, Protein kinase spans 255–562 (DTDNKPIGSG…MDDLFNDPFF (308 aa)). Residues 261-269 (IGSGGSSEV) and Lys-285 each bind ATP. Asp-388 serves as the catalytic Proton acceptor. Polar residues predominate over residues 585–595 (STSTNDFSENS). A disordered region spans residues 585-795 (STSTNDFSEN…SVSSSKKKKV (211 aa)). Phosphoserine is present on residues Ser-623 and Ser-632. Basic and acidic residues-rich tracts occupy residues 638–651 (KVKD…HDVG) and 659–685 (TKPK…KVIE). Position 694 is a phosphoserine (Ser-694). Thr-700 carries the phosphothreonine modification. At Ser-711 the chain carries Phosphoserine. The segment covering 727 to 736 (TPTTPTHNGP) has biased composition (low complexity). The residue at position 737 (Thr-737) is a Phosphothreonine. A phosphoserine mark is found at Ser-752, Ser-755, Ser-778, and Ser-781. Residues 755–767 (SLKSETPASTKNF) show a composition bias toward polar residues. The span at 768–789 (SAPNVSSSSNSLRSLGSPSVSS) shows a compositional bias: low complexity.

It belongs to the protein kinase superfamily. Ser/Thr protein kinase family.

The protein localises to the nucleus. It localises to the cytoplasm. It catalyses the reaction L-seryl-[protein] + ATP = O-phospho-L-seryl-[protein] + ADP + H(+). The enzyme catalyses L-threonyl-[protein] + ATP = O-phospho-L-threonyl-[protein] + ADP + H(+). Its function is as follows. Essential determinant for high-affinity spermidine transport. Required for the activation of the plasma membrane proton pump PMA1 via phosphorylation of 'Ser-899'. The chain is Serine/threonine-protein kinase PTK2/STK2 (PTK2) from Saccharomyces cerevisiae (strain ATCC 204508 / S288c) (Baker's yeast).